Here is a 241-residue protein sequence, read N- to C-terminus: Protein TraL (241 aa).

To plasmid IncP-alpha RP4 TraL.

The chain is Protein TraL (traL) from Escherichia coli.